Reading from the N-terminus, the 329-residue chain is DNA-directed RNA polymerase subunit alpha (329 aa).

Residues 1-235 (MQGSVTEFLK…EQLDAFVDLR (235 aa)) form an alpha N-terminal domain (alpha-NTD) region. Positions 249–329 (FDPILLRPVD…NWPPASIAED (81 aa)) are alpha C-terminal domain (alpha-CTD).

The protein belongs to the RNA polymerase alpha chain family. As to quaternary structure, homodimer. The RNAP catalytic core consists of 2 alpha, 1 beta, 1 beta' and 1 omega subunit. When a sigma factor is associated with the core the holoenzyme is formed, which can initiate transcription.

The catalysed reaction is RNA(n) + a ribonucleoside 5'-triphosphate = RNA(n+1) + diphosphate. Functionally, DNA-dependent RNA polymerase catalyzes the transcription of DNA into RNA using the four ribonucleoside triphosphates as substrates. This Photobacterium profundum (strain SS9) protein is DNA-directed RNA polymerase subunit alpha.